The primary structure comprises 345 residues: S-adenosylmethionine:tRNA ribosyltransferase-isomerase (345 aa).

This sequence belongs to the QueA family. As to quaternary structure, monomer.

The protein resides in the cytoplasm. The enzyme catalyses 7-aminomethyl-7-carbaguanosine(34) in tRNA + S-adenosyl-L-methionine = epoxyqueuosine(34) in tRNA + adenine + L-methionine + 2 H(+). The protein operates within tRNA modification; tRNA-queuosine biosynthesis. Functionally, transfers and isomerizes the ribose moiety from AdoMet to the 7-aminomethyl group of 7-deazaguanine (preQ1-tRNA) to give epoxyqueuosine (oQ-tRNA). This is S-adenosylmethionine:tRNA ribosyltransferase-isomerase from Anaeromyxobacter dehalogenans (strain 2CP-C).